Consider the following 511-residue polypeptide: Maturase K (511 aa).

Belongs to the intron maturase 2 family. MatK subfamily.

It is found in the plastid. The protein localises to the chloroplast. Its function is as follows. Usually encoded in the trnK tRNA gene intron. Probably assists in splicing its own and other chloroplast group II introns. The chain is Maturase K from Chloranthus spicatus (Chulantree).